The sequence spans 377 residues: Succinyl-diaminopimelate desuccinylase 2 (377 aa).

H62 lines the Zn(2+) pocket. Residue D64 is part of the active site. D95 is a binding site for Zn(2+). E129 acts as the Proton acceptor in catalysis. Residues E130, E158, and H350 each coordinate Zn(2+).

It belongs to the peptidase M20A family. DapE subfamily. In terms of assembly, homodimer. Requires Zn(2+) as cofactor. It depends on Co(2+) as a cofactor.

The enzyme catalyses N-succinyl-(2S,6S)-2,6-diaminopimelate + H2O = (2S,6S)-2,6-diaminopimelate + succinate. The protein operates within amino-acid biosynthesis; L-lysine biosynthesis via DAP pathway; LL-2,6-diaminopimelate from (S)-tetrahydrodipicolinate (succinylase route): step 3/3. In terms of biological role, catalyzes the hydrolysis of N-succinyl-L,L-diaminopimelic acid (SDAP), forming succinate and LL-2,6-diaminopimelate (DAP), an intermediate involved in the bacterial biosynthesis of lysine and meso-diaminopimelic acid, an essential component of bacterial cell walls. This Shewanella loihica (strain ATCC BAA-1088 / PV-4) protein is Succinyl-diaminopimelate desuccinylase 2.